Here is a 205-residue protein sequence, read N- to C-terminus: Large ribosomal subunit protein uL13 (205 aa).

It belongs to the universal ribosomal protein uL13 family.

This chain is Large ribosomal subunit protein uL13 (RPL13A), found in Lupinus luteus (European yellow lupine).